A 454-amino-acid polypeptide reads, in one-letter code: N-lysine methyltransferase setd6 (454 aa).

The SET domain occupies 38-265 (PKVYISTEGT…AGQELFNTYG (228 aa)).

This sequence belongs to the class V-like SAM-binding methyltransferase superfamily. Histone-lysine methyltransferase family. SETD6 subfamily.

The protein localises to the nucleus. Protein-lysine N-methyltransferase. This is N-lysine methyltransferase setd6 (setd6) from Xenopus tropicalis (Western clawed frog).